The primary structure comprises 218 residues: Deoxyribose-phosphate aldolase (218 aa).

The Proton donor/acceptor role is filled by D92. The active-site Schiff-base intermediate with acetaldehyde is K156. Residue K185 is the Proton donor/acceptor of the active site.

The protein belongs to the DeoC/FbaB aldolase family. DeoC type 1 subfamily.

It is found in the cytoplasm. The enzyme catalyses 2-deoxy-D-ribose 5-phosphate = D-glyceraldehyde 3-phosphate + acetaldehyde. It participates in carbohydrate degradation; 2-deoxy-D-ribose 1-phosphate degradation; D-glyceraldehyde 3-phosphate and acetaldehyde from 2-deoxy-alpha-D-ribose 1-phosphate: step 2/2. Its function is as follows. Catalyzes a reversible aldol reaction between acetaldehyde and D-glyceraldehyde 3-phosphate to generate 2-deoxy-D-ribose 5-phosphate. This Desulfitobacterium hafniense (strain DSM 10664 / DCB-2) protein is Deoxyribose-phosphate aldolase.